We begin with the raw amino-acid sequence, 159 residues long: Probable deoxyuridine 5'-triphosphate nucleotidohydrolase (159 aa).

The protein belongs to the dCTP deaminase family. Archaeal dUTPase subfamily.

It carries out the reaction dUTP + H2O = dUMP + diphosphate + H(+). It participates in pyrimidine metabolism; dUMP biosynthesis; dUMP from dCTP (dUTP route): step 2/2. This enzyme is involved in nucleotide metabolism: it produces dUMP, the immediate precursor of thymidine nucleotides and it decreases the intracellular concentration of dUTP so that uracil cannot be incorporated into DNA. The chain is Probable deoxyuridine 5'-triphosphate nucleotidohydrolase from Aeropyrum pernix (strain ATCC 700893 / DSM 11879 / JCM 9820 / NBRC 100138 / K1).